The chain runs to 310 residues: Putative S-adenosyl-L-methionine-dependent methyltransferase Franean1_4929 (310 aa).

Residues 1-28 are disordered; sequence MSRPSAPRGRTELRSIHERGHERGSAGV. The segment covering 9–24 has biased composition (basic and acidic residues); that stretch reads GRTELRSIHERGHERG. S-adenosyl-L-methionine contacts are provided by residues Asp-136 and 165 to 166; that span reads DL.

It belongs to the UPF0677 family.

Its function is as follows. Exhibits S-adenosyl-L-methionine-dependent methyltransferase activity. This is Putative S-adenosyl-L-methionine-dependent methyltransferase Franean1_4929 from Parafrankia sp. (strain EAN1pec).